The sequence spans 583 residues: Chitinase 2 (583 aa).

The N-terminal stretch at 1-19 is a signal peptide; the sequence is MLSFKSLLAAAVVASSALA. One can recognise a GH18 domain in the interval 23–305; it reads NQVALYWGQN…VQVKNVLNQN (283 aa). Glu-153 functions as the Proton donor in the catalytic mechanism. 3 N-linked (GlcNAc...) asparagine glycosylation sites follow: Asn-370, Asn-546, and Asn-549. Gly-560 carries GPI-anchor amidated glycine lipidation. Residues 561-583 constitute a propeptide, removed in mature form; that stretch reads AAVANSLNSVWFTVPFLLAAFAF.

Belongs to the glycosyl hydrolase 18 family. Chitinase class III subfamily. In terms of processing, the GPI-anchor is attached to the protein in the endoplasmic reticulum and serves to target the protein to the cell surface. There, the glucosamine-inositol phospholipid moiety is cleaved off and the GPI-modified mannoprotein is covalently attached via its lipidless GPI glycan remnant to the 1,6-beta-glucan of the outer cell wall layer. Post-translationally, proteolytic cleavage by SAP9 and SAP10 leads to the cell wall release of CHT2 and increased chitinase activity, suggesting a direct influence of SAP9 and SAP10 on CHT2 function.

It localises to the secreted. The protein localises to the cell wall. The protein resides in the membrane. The enzyme catalyses Random endo-hydrolysis of N-acetyl-beta-D-glucosaminide (1-&gt;4)-beta-linkages in chitin and chitodextrins.. In terms of biological role, chitinase involved in the remodeling of chitin in the fungal cell wall. Plays a role in cell separation. The protein is Chitinase 2 (CHT2) of Candida albicans (strain SC5314 / ATCC MYA-2876) (Yeast).